We begin with the raw amino-acid sequence, 184 residues long: Photosystem I assembly protein Ycf4 (184 aa).

A run of 2 helical transmembrane segments spans residues 19-39 (LSNFCWALILFLGSLGFLLVG) and 57-77 (FIFFPQGIVMSFYGIAGLFIS).

It belongs to the Ycf4 family.

The protein localises to the plastid. Its subcellular location is the chloroplast thylakoid membrane. Functionally, seems to be required for the assembly of the photosystem I complex. In Jasminum nudiflorum (Winter jasmine), this protein is Photosystem I assembly protein Ycf4.